An 828-amino-acid polypeptide reads, in one-letter code: Periplasmic nitrate reductase (828 aa).

The segment at residues 1-31 is a signal peptide (tat-type signal); it reads MKLSRRSFMKANAVAAAAAAAGLSVPGVARA. Residues 39-95 enclose the 4Fe-4S Mo/W bis-MGD-type domain; the sequence is IKWDKAPCRFCGTGCGVLVGTQQGRVVACQGDPDAPVNRGLNCIKGYFLPKIMYGKD. Residues Cys46, Cys49, Cys53, and Cys81 each contribute to the [4Fe-4S] cluster site. Residues Lys83, Gln150, Asn175, Cys179, 212 to 219, 243 to 247, 262 to 264, Met372, Gln376, Asn482, 508 to 509, Lys531, Asp558, and 718 to 727 contribute to the Mo-bis(molybdopterin guanine dinucleotide) site; these read WGSNMAEM, STYQH, QSD, SD, and TGRVLEHWHT. Residue Phe794 participates in substrate binding. Mo-bis(molybdopterin guanine dinucleotide) contacts are provided by Asn802 and Lys819.

The protein belongs to the prokaryotic molybdopterin-containing oxidoreductase family. NasA/NapA/NarB subfamily. In terms of assembly, component of the periplasmic nitrate reductase NapAB complex composed of NapA and NapB. [4Fe-4S] cluster is required as a cofactor. The cofactor is Mo-bis(molybdopterin guanine dinucleotide). Post-translationally, predicted to be exported by the Tat system. The position of the signal peptide cleavage has not been experimentally proven.

The protein localises to the periplasm. The enzyme catalyses 2 Fe(II)-[cytochrome] + nitrate + 2 H(+) = 2 Fe(III)-[cytochrome] + nitrite + H2O. Its function is as follows. Catalytic subunit of the periplasmic nitrate reductase complex NapAB. Receives electrons from NapB and catalyzes the reduction of nitrate to nitrite. This Escherichia coli O81 (strain ED1a) protein is Periplasmic nitrate reductase.